The primary structure comprises 431 residues: Mevalonate kinase (431 aa).

Residues lysine 13, serine 139, and 144–150 (GAGLGSS) each bind ATP. The Mg(2+) site is built by serine 150 and glutamate 198. The active-site Proton acceptor is aspartate 209.

This sequence belongs to the GHMP kinase family. Mevalonate kinase subfamily. As to quaternary structure, homodimer.

The protein localises to the cytoplasm. The protein resides in the cytosol. The enzyme catalyses (R)-mevalonate + ATP = (R)-5-phosphomevalonate + ADP + H(+). Its pathway is isoprenoid biosynthesis; isopentenyl diphosphate biosynthesis via mevalonate pathway; isopentenyl diphosphate from (R)-mevalonate: step 1/3. Mevalonate kinase; part of the second module of ergosterol biosynthesis pathway that includes the middle steps of the pathway. ERG12 converts mevalonate into 5-phosphomevalonate. The second module is carried out in the vacuole and involves the formation of farnesyl diphosphate, which is also an important intermediate in the biosynthesis of ubiquinone, dolichol, heme and prenylated proteins. Activity by the mevalonate kinase ERG12 first converts mevalonate into 5-phosphomevalonate. 5-phosphomevalonate is then further converted to 5-diphosphomevalonate by the phosphomevalonate kinase ERG8. The diphosphomevalonate decarboxylase MVD then produces isopentenyl diphosphate. The isopentenyl-diphosphate delta-isomerase IDI1 then catalyzes the 1,3-allylic rearrangement of the homoallylic substrate isopentenyl (IPP) to its highly electrophilic allylic isomer, dimethylallyl diphosphate (DMAPP). Finally the farnesyl diphosphate synthase ERG20 catalyzes the sequential condensation of isopentenyl pyrophosphate with dimethylallyl pyrophosphate, and then with the resultant geranylpyrophosphate to the ultimate product farnesyl pyrophosphate. The sequence is that of Mevalonate kinase from Candida albicans (strain SC5314 / ATCC MYA-2876) (Yeast).